Consider the following 208-residue polypeptide: Putative speedy protein E7 (208 aa).

The protein belongs to the Speedy/Ringo family.

The chain is Putative speedy protein E7 (SPDYE7P) from Homo sapiens (Human).